The following is a 349-amino-acid chain: Fe(3+) ions import ATP-binding protein FbpC (349 aa).

The ABC transporter domain maps to 4–236; it reads LELHHIGKSY…PVDEPTATFL (233 aa). 36 to 43 is an ATP binding site; the sequence is GPSGSGKT.

The protein belongs to the ABC transporter superfamily. Fe(3+) ion importer (TC 3.A.1.10) family. As to quaternary structure, the complex is composed of two ATP-binding proteins (FbpC), two transmembrane proteins (FbpB) and a solute-binding protein (FbpA).

The protein localises to the cell inner membrane. It catalyses the reaction Fe(3+)(out) + ATP + H2O = Fe(3+)(in) + ADP + phosphate + H(+). Its function is as follows. Part of the ABC transporter complex FbpABC involved in Fe(3+) ions import. Responsible for energy coupling to the transport system. The protein is Fe(3+) ions import ATP-binding protein FbpC of Yersinia pestis bv. Antiqua (strain Antiqua).